The primary structure comprises 1488 residues: MSIPENAIAVVGMAGRFPGAKDVSAFWSNLRRGKESIVTLSEQELRDAGVSDKTLADPAYVRRAPLLDGIDEFDAGFFGFPPLAAQVLDPQHRLFLQCAWHALEDAGADPARFDGSIGVYGTSSPSGYLLHNLLSHRDPNAVLAEGLNFDQFSLFLQNDKDFLATRISHAFNLRGPSIAVQTACSSSLVAVHLACLSLLSGECDMALAGGSSLCIPHRVGYFTSPGSMVSAVGHCRPFDVRADGTVFGSGVGLVVLKPLAAAIDAGDRIHAVIRGSAINNDGSAKMGYAAPNPAAQADVIAEAHAVSGIDSSTVSYVECHGTGTPLGDPIEIQGLRAAFEVSQTSRSAPCVLGSVKSNIGHLEVAAGIAGLIKTILCLKNKALPATLHYTSPNPELRLDQSPFVVQSKYGPWECDGVRRAGVSSFGVGGTNAHVVLEEAPAEASEVSAHAEPAGPQVILLSAQTAAALGESRTALAAALETQDGPRLSDVAYTLARRRKHNVTMAAVVHDREHAATVLRAAEHDNVFVGEAAHDGEHGDRADAAPTSDRVVFLFPGQGAQHVGMAKGLYDTEPVFAQHFDTCAAGFRDETGIDLHAEVFDGTATDLERIDRSQPALFTVEYALAKLVDTFGVRAGAYIGYSTGEYIAATLAGVFDLQTAIKTVSLRARLMHESPPGAMVAVALGPDDVTQYLPPEVELSAVNDPGNCVVAGPKDQIRALRQRLTEAGIPVRRVRATHAFHTSAMDPMLGQFQEFLSRQQLRPPRTPLLSNLTGSWMSDQQVVDPASWTRQISSPIRFADELDVVLAAPSRILVEVGPGGSLTGSAMRHPKWSTTHRTVRLMRHPLQDVDDRDTFLRALGELWSAGVEVDWTPRRPAVPHLVSLPGYPFARQRHWVEPNHTVWAQAPGANNGSPAGTADGSTAATVDAARNGESQTEVTLQRIWSQCLGVSSVDRNANFFDLGGDSLMAISIAMAAANEGLTITPQDLYEYPTLASLTAAVDASFASSGLAKPPEAQANPAVPPNVTYFLDRGLRDTGRCRVPLILRLDPKIGLPDIRAVLTAVVNHHDALRLHLVGNDGIWEQHIAAPAEFTGLSNRSVPNGVAAGSPEERAAVLGILAELLEDQTDPNAPLAAVHIAAAHGGPHYLCLAIHAMVTDDSSRQILATDIVTAFGQRLAGEEITLEPVSTGWREWSLRCAALATHPAALDTRSYWIENSTKATLWLADALPNAHTAHPPRADELTKLSSTLSVEQTSELDDGRRRFRRSIQTILLAALGRTIAQTVGEGVVAVELEGEGRSVLRPDVDLRRTVGWFTTYYPVPLACATGLGALAQLDAVHNTLKSVPHYGIGYGLLRYVYAPTGRVLGAQRTPDIHFRYAGVIPELPSGDAPVQFDSDMTLPVREPIPGMGHAIELRVYRFGGSLHLDWWYDTRRIPAATAEALERTFPLALSALIQEAIAAEHTEHDDSEIVGEPEAGALVDLSSMDAG.

The Ketosynthase family 3 (KS3) domain occupies 5 to 438 (ENAIAVVGMA…GTNAHVVLEE (434 aa)). Residues Cys-184, His-320, and His-361 each act as for beta-ketoacyl synthase activity in the active site. Residues 551–868 (VFLFPGQGAQ…GELWSAGVEV (318 aa)) are acyltransferase. Catalysis depends on Ser-641, which acts as the For malonyltransferase activity. Positions 930–1004 (NGESQTEVTL…SLTAAVDASF (75 aa)) constitute a Carrier domain. The residue at position 965 (Ser-965) is an O-(pantetheine 4'-phosphoryl)serine. 1286-1331 (EGVVAVELEGEGRSVLRPDVDLRRTVGWFTTYYPVPLACATGLGAL) lines the NADP(+) pocket.

Requires NADP(+) as cofactor. Pantetheine 4'-phosphate is required as a cofactor.

It catalyses the reaction icosanoyl-[(phenol)carboxyphthiodiolenone synthase] + 2 (S)-methylmalonyl-CoA + 3 malonyl-CoA + 5 NADPH + 10 H(+) = C32-carboxyphthiodiolenone-[(phenol)carboxyphthiodiolenone synthase] + 5 CO2 + 5 NADP(+) + 5 CoA + 2 H2O. The enzyme catalyses docosanoyl-[(phenol)carboxyphthiodiolenone synthase] + 2 (S)-methylmalonyl-CoA + 3 malonyl-CoA + 5 NADPH + 10 H(+) = C34-carboxyphthiodiolenone-[(phenol)carboxyphthiodiolenone synthase] + 5 CO2 + 5 NADP(+) + 5 CoA + 2 H2O. The catalysed reaction is 17-(4-hydroxyphenyl)heptadecanoyl-[(phenol)carboxyphthiodiolenone synthase] + 2 (S)-methylmalonyl-CoA + 3 malonyl-CoA + 5 NADPH + 10 H(+) = C35-(phenol)carboxyphthiodiolenone-[(phenol)carboxyphthiodiolenone synthase] + 5 CO2 + 5 NADP(+) + 5 CoA + 2 H2O. It carries out the reaction 19-(4-hydroxyphenyl)nonadecanoyl-[(phenol)carboxyphthiodiolenone synthase] + 2 (S)-methylmalonyl-CoA + 3 malonyl-CoA + 5 NADPH + 10 H(+) = C37-(phenol)carboxyphthiodiolenone-[(phenol)carboxyphthiodiolenone synthase] + 5 CO2 + 5 NADP(+) + 5 CoA + 2 H2O. It functions in the pathway lipid metabolism; fatty acid biosynthesis. Part of the PpsABCDE complex involved in the biosynthesis of the lipid core common to phthiocerols and phenolphthiocerols by successive additions of malonyl-CoA or methylmalonyl-CoA extender units. PpsA can accept as substrate the activated forms of either icosanoyl (C20), docosanoyl (C22) or lignoceroyl (C24) groups from FadD26, or a (4-hydroxyphenyl)-C17 or (4-hydroxyphenyl)-C19 fatty acyl from FadD29. PpsA initiates the biosynthesis and extends its substrate using a malonyl-CoA extender unit. The PpsB and PpsC proteins add the second and third malonyl-CoA extender units. PpsD adds an (R)-methylmalonyl unit and PpsE adds a second (R)-methylmalonyl unit. The incorporation of the methylmalonyl units results in formation of two branched methyl groups in the elongated product. This Mycobacterium tuberculosis (strain CDC 1551 / Oshkosh) protein is Phenolphthiocerol/phthiocerol polyketide synthase subunit E (ppsE).